The following is a 252-amino-acid chain: Endonuclease NucS (252 aa).

Belongs to the NucS endonuclease family.

The protein localises to the cytoplasm. In terms of biological role, cleaves both 3' and 5' ssDNA extremities of branched DNA structures. In Thermococcus kodakarensis (strain ATCC BAA-918 / JCM 12380 / KOD1) (Pyrococcus kodakaraensis (strain KOD1)), this protein is Endonuclease NucS.